Consider the following 271-residue polypeptide: Ribosomal RNA small subunit methyltransferase I (271 aa).

This sequence belongs to the methyltransferase superfamily. RsmI family.

It is found in the cytoplasm. It catalyses the reaction cytidine(1402) in 16S rRNA + S-adenosyl-L-methionine = 2'-O-methylcytidine(1402) in 16S rRNA + S-adenosyl-L-homocysteine + H(+). Catalyzes the 2'-O-methylation of the ribose of cytidine 1402 (C1402) in 16S rRNA. The protein is Ribosomal RNA small subunit methyltransferase I of Campylobacter fetus subsp. fetus (strain 82-40).